The chain runs to 310 residues: ADP-L-glycero-D-manno-heptose-6-epimerase (310 aa).

NADP(+) contacts are provided by residues 10–11, 31–32, K38, K53, 75–79, and N92; these read FI, DN, and EGACS. Y140 (proton acceptor) is an active-site residue. K144 serves as a coordination point for NADP(+). N169 lines the substrate pocket. NADP(+) is bound by residues V170 and K178. Residue K178 is the Proton acceptor of the active site. Substrate-binding positions include S180, H187, 201-204, R209, and Y272; that span reads FSGS.

It belongs to the NAD(P)-dependent epimerase/dehydratase family. HldD subfamily. As to quaternary structure, homopentamer. NADP(+) is required as a cofactor.

The enzyme catalyses ADP-D-glycero-beta-D-manno-heptose = ADP-L-glycero-beta-D-manno-heptose. The protein operates within nucleotide-sugar biosynthesis; ADP-L-glycero-beta-D-manno-heptose biosynthesis; ADP-L-glycero-beta-D-manno-heptose from D-glycero-beta-D-manno-heptose 7-phosphate: step 4/4. Catalyzes the interconversion between ADP-D-glycero-beta-D-manno-heptose and ADP-L-glycero-beta-D-manno-heptose via an epimerization at carbon 6 of the heptose. The protein is ADP-L-glycero-D-manno-heptose-6-epimerase of Pectobacterium atrosepticum (strain SCRI 1043 / ATCC BAA-672) (Erwinia carotovora subsp. atroseptica).